The sequence spans 43 residues: Protein PsbN (43 aa).

Residues 4–24 (GILIVIFISCLLVSFTGYAVY) form a helical membrane-spanning segment.

Belongs to the PsbN family.

The protein resides in the plastid. The protein localises to the chloroplast thylakoid membrane. In terms of biological role, may play a role in photosystem I and II biogenesis. The sequence is that of Protein PsbN from Coleochaete orbicularis (Charophycean green alga).